We begin with the raw amino-acid sequence, 465 residues long: Branched-chain amino acid permease BcaP (465 aa).

A run of 12 helical transmembrane segments spans residues 28–48, 56–76, 88–110, 149–169, 181–201, 219–239, 259–279, 309–329, 359–379, 380–400, 416–436, and 438–458; these read FLAL…PGQV, GVVF…LAYA, AYSW…ALLA, DGGI…IIVF, ILVV…ITVI, FGGF…YIGF, GIIG…LVLV, VVTA…VLAG, VWTL…AFLA, QLIS…IYSL, PFYP…FWGL, and VQAK…YFAY.

Belongs to the amino acid-polyamine-organocation (APC) superfamily.

Its subcellular location is the cell membrane. Branched-chain amino acid transport system that specifically transports branched-chain amino acids (BCAAs) (isoleucine, leucine and valine) and, to a lesser extent, methionine. Important for CodY-mediated regulation, and required for optimal growth in media containing free amino acids as the only amino acid source. The sequence is that of Branched-chain amino acid permease BcaP from Lactococcus lactis subsp. cremoris (strain MG1363).